Reading from the N-terminus, the 295-residue chain is Shikimate dehydrogenase (NADP(+)) (295 aa).

Shikimate is bound by residues 20–22 (SWS) and Thr-68. The Proton acceptor role is filled by Lys-72. Residues Asn-93 and Asp-108 each contribute to the shikimate site. NADP(+)-binding positions include 132–136 (GNGGA) and Met-234. Residue Tyr-236 coordinates shikimate. Residue Gly-257 coordinates NADP(+).

This sequence belongs to the shikimate dehydrogenase family. In terms of assembly, homodimer.

It carries out the reaction shikimate + NADP(+) = 3-dehydroshikimate + NADPH + H(+). Its pathway is metabolic intermediate biosynthesis; chorismate biosynthesis; chorismate from D-erythrose 4-phosphate and phosphoenolpyruvate: step 4/7. Functionally, involved in the biosynthesis of the chorismate, which leads to the biosynthesis of aromatic amino acids. Catalyzes the reversible NADPH linked reduction of 3-dehydroshikimate (DHSA) to yield shikimate (SA). The sequence is that of Shikimate dehydrogenase (NADP(+)) from Chlorobaculum tepidum (strain ATCC 49652 / DSM 12025 / NBRC 103806 / TLS) (Chlorobium tepidum).